A 284-amino-acid chain; its full sequence is Chaperone protein dnaJ 6 (284 aa).

Disordered regions lie at residues 1–30 (MGRKKKSRASTTEEDEIEMDNAGPSSETSL), 196–221 (NKISETKPPTSPLRKRKKKKSAAKDS), and 252–284 (GGDAEAEPTEEEFEAAQRRIESKRKPSKKSRGK). The short motif at 3-6 (RKKK) is the Nuclear localization signal element. The J domain maps to 29–94 (SLYEVLGVER…EKRAVYDQTG (66 aa)). The Nuclear localization signal motif lies at 209 to 215 (RKRKKKK). Acidic residues predominate over residues 255–265 (AEAEPTEEEFE). The span at 266-275 (AAQRRIESKR) shows a compositional bias: basic and acidic residues.

The protein belongs to the DnaJ family. C/III subfamily. Highly expressed in leaves, flowers and siliques, and to lower extent in roots.

The protein localises to the nucleus. Plays a continuous role in plant development probably in the structural organization of compartments. This Arabidopsis thaliana (Mouse-ear cress) protein is Chaperone protein dnaJ 6 (ATJ6).